The sequence spans 66 residues: Large ribosomal subunit protein bL35 (66 aa).

This sequence belongs to the bacterial ribosomal protein bL35 family.

The chain is Large ribosomal subunit protein bL35 from Parvibaculum lavamentivorans (strain DS-1 / DSM 13023 / NCIMB 13966).